The chain runs to 244 residues: 3-oxoacyl-[acyl-carrier-protein] reductase FabG (244 aa).

Residues 12–15 and Thr37 each bind NADP(+); that span reads GANQ. The Ca(2+) site is built by Glu50 and Gly53. NADP(+) is bound by residues 59 to 60 and Asn86; that span reads NL. Ser138 provides a ligand contact to substrate. Asn145 lines the Ca(2+) pocket. Tyr151 acts as the Proton acceptor in catalysis. Residues 151 to 155 and Ile184 contribute to the NADP(+) site; that span reads YSASK. Position 234 (Thr234) interacts with Ca(2+).

The protein belongs to the short-chain dehydrogenases/reductases (SDR) family. Homotetramer.

The enzyme catalyses a (3R)-hydroxyacyl-[ACP] + NADP(+) = a 3-oxoacyl-[ACP] + NADPH + H(+). Its pathway is lipid metabolism; fatty acid biosynthesis. In terms of biological role, catalyzes the NADPH-dependent reduction of beta-ketoacyl-ACP substrates to beta-hydroxyacyl-ACP products, the first reductive step in the elongation cycle of fatty acid biosynthesis. The chain is 3-oxoacyl-[acyl-carrier-protein] reductase FabG (fabG) from Buchnera aphidicola subsp. Acyrthosiphon pisum (strain APS) (Acyrthosiphon pisum symbiotic bacterium).